Consider the following 166-residue polypeptide: uncharacterized protein (166 aa).

This is an uncharacterized protein from Saccharomyces cerevisiae (strain ATCC 204508 / S288c) (Baker's yeast).